A 229-amino-acid chain; its full sequence is Potassium/proton antiporter CemA (229 aa).

Transmembrane regions (helical) follow at residues 7-27 (FTPL…SLLF), 107-127 (ILHF…SIFG), and 189-209 (IISG…KYWI).

The protein belongs to the CemA family.

The protein resides in the plastid. It is found in the chloroplast inner membrane. It catalyses the reaction K(+)(in) + H(+)(out) = K(+)(out) + H(+)(in). Its function is as follows. Contributes to K(+)/H(+) antiport activity by supporting proton efflux to control proton extrusion and homeostasis in chloroplasts in a light-dependent manner to modulate photosynthesis. Prevents excessive induction of non-photochemical quenching (NPQ) under continuous-light conditions. Indirectly promotes efficient inorganic carbon uptake into chloroplasts. The polypeptide is Potassium/proton antiporter CemA (Guizotia abyssinica (Niger)).